Reading from the N-terminus, the 62-residue chain is Photosystem II reaction center protein Z (62 aa).

2 helical membrane passes run 8–28 and 41–61; these read TLFA…VVFA and FSGV…NSFV.

The protein belongs to the PsbZ family. PSII is composed of 1 copy each of membrane proteins PsbA, PsbB, PsbC, PsbD, PsbE, PsbF, PsbH, PsbI, PsbJ, PsbK, PsbL, PsbM, PsbT, PsbY, PsbZ, Psb30/Ycf12, at least 3 peripheral proteins of the oxygen-evolving complex and a large number of cofactors. It forms dimeric complexes.

It localises to the plastid. The protein localises to the chloroplast thylakoid membrane. May control the interaction of photosystem II (PSII) cores with the light-harvesting antenna, regulates electron flow through the 2 photosystem reaction centers. PSII is a light-driven water plastoquinone oxidoreductase, using light energy to abstract electrons from H(2)O, generating a proton gradient subsequently used for ATP formation. This is Photosystem II reaction center protein Z from Oltmannsiellopsis viridis (Marine flagellate).